The chain runs to 229 residues: uncharacterized protein (229 aa).

The region spanning 102–217 (RRRTVRVEPD…REKVRRYVFE (116 aa)) is the PilZ domain.

This sequence to A.aeolicus aq_820 and aq_1211.

This is an uncharacterized protein from Aquifex aeolicus (strain VF5).